The chain runs to 251 residues: Triosephosphate isomerase (251 aa).

A substrate-binding site is contributed by 10 to 12 (NWK). Residue His-98 is the Electrophile of the active site. The active-site Proton acceptor is Glu-169. Substrate is bound by residues Gly-175, Ser-213, and 234-235 (GG).

Belongs to the triosephosphate isomerase family. As to quaternary structure, homodimer.

It is found in the cytoplasm. The enzyme catalyses D-glyceraldehyde 3-phosphate = dihydroxyacetone phosphate. It participates in carbohydrate biosynthesis; gluconeogenesis. It functions in the pathway carbohydrate degradation; glycolysis; D-glyceraldehyde 3-phosphate from glycerone phosphate: step 1/1. In terms of biological role, involved in the gluconeogenesis. Catalyzes stereospecifically the conversion of dihydroxyacetone phosphate (DHAP) to D-glyceraldehyde-3-phosphate (G3P). This chain is Triosephosphate isomerase, found in Paracidovorax citrulli (strain AAC00-1) (Acidovorax citrulli).